Reading from the N-terminus, the 165-residue chain is Nucleotide-binding protein Tfu_2672 (165 aa).

This sequence belongs to the YajQ family.

In terms of biological role, nucleotide-binding protein. The chain is Nucleotide-binding protein Tfu_2672 from Thermobifida fusca (strain YX).